Consider the following 346-residue polypeptide: Elongation factor Ts (346 aa).

Residues 80–83 are involved in Mg(2+) ion dislocation from EF-Tu; it reads TDFV.

It belongs to the EF-Ts family.

The protein localises to the cytoplasm. Its function is as follows. Associates with the EF-Tu.GDP complex and induces the exchange of GDP to GTP. It remains bound to the aminoacyl-tRNA.EF-Tu.GTP complex up to the GTP hydrolysis stage on the ribosome. This chain is Elongation factor Ts, found in Streptococcus pyogenes serotype M18 (strain MGAS8232).